We begin with the raw amino-acid sequence, 180 residues long: UPF0227 protein Ent638_1623 (180 aa).

This sequence belongs to the UPF0227 family.

The polypeptide is UPF0227 protein Ent638_1623 (Enterobacter sp. (strain 638)).